The primary structure comprises 254 residues: Metallo-beta-lactamase type 2 (254 aa).

An N-terminal signal peptide occupies residues 1–27 (MMKGWMKCGLAGAVVLMASFWGGSVRA). Asp-99 contributes to the Zn(2+) binding site. Substrate contacts are provided by Thr-135 and His-174. Cys-193 lines the Zn(2+) pocket. Substrate contacts are provided by Lys-196 and Asn-201. His-231 is a Zn(2+) binding site.

This sequence belongs to the metallo-beta-lactamase superfamily. Class-B beta-lactamase family. As to quaternary structure, monomer. Zn(2+) is required as a cofactor.

It is found in the periplasm. It carries out the reaction a beta-lactam + H2O = a substituted beta-amino acid. With respect to regulation, competitively inhibited by mercaptophosphonate and pyridine carboxylate derivatives. Also inhibited by the binding of a second zinc ion and by chelating agents such as EDTA. Confers resistance to the different beta-lactams antibiotics (penicillin, cephalosporin and carbapenem) via the hydrolysis of the beta-lactam ring. It is able to hydrolyze penicillin and imipenem, but is much less active against cephalothin, cefotaxime, meropenem and ceftazidime. This chain is Metallo-beta-lactamase type 2, found in Aeromonas hydrophila.